The chain runs to 243 residues: Probable transcriptional regulatory protein BB_0025 (243 aa).

Belongs to the TACO1 family.

The protein resides in the cytoplasm. This chain is Probable transcriptional regulatory protein BB_0025, found in Borreliella burgdorferi (strain ATCC 35210 / DSM 4680 / CIP 102532 / B31) (Borrelia burgdorferi).